The chain runs to 354 residues: Methionine import ATP-binding protein MetN (354 aa).

Residues 8–250 (LDHIDITFRQ…PKEALTQEFI (243 aa)) enclose the ABC transporter domain. 42-49 (GYSGAGKS) contacts ATP.

This sequence belongs to the ABC transporter superfamily. Methionine importer (TC 3.A.1.24) family. In terms of assembly, the complex is composed of two ATP-binding proteins (MetN), two transmembrane proteins (MetI) and a solute-binding protein (MetQ).

It is found in the cell membrane. The enzyme catalyses L-methionine(out) + ATP + H2O = L-methionine(in) + ADP + phosphate + H(+). The catalysed reaction is D-methionine(out) + ATP + H2O = D-methionine(in) + ADP + phosphate + H(+). Its function is as follows. Part of the ABC transporter complex MetNIQ involved in methionine import. Responsible for energy coupling to the transport system. This is Methionine import ATP-binding protein MetN from Streptococcus pyogenes serotype M2 (strain MGAS10270).